The following is a 389-amino-acid chain: MVSVSEIRKAQRAEGPATILAIGTANPANCVEQSTYPDFYFRITNSEHKIELKQKFQRMCDKSMINRRYMYLTEEILKENPSVCEYMAPSLDARQDMVVVEVPRLGKEAAVKAIKEWGQPKSKITHLIFCTTSGVDMPGADYQLTKLLGLRPYVKRYMMYQQGCFAGGTVLRLAKDLAENNKGARVLVVCSEVTAVTFRGPSDTHLDSLVGQALFGDGAAALIVGSDPLPEIEKPIFEMVWTAQTIAPDSEGAIDGHLREAGLTFHLLKDVPAIVSKNIDKALVEAFQPLGISDYNSIFWIAHPGGPAILDQVEQKLALKPEKMKATREVLSEYGNMSSACVLFILDEMRRKSIQNGLKTTGEGLEWGVLFGFGPGLTIETVVLHSVVI.

The active site involves C164.

Belongs to the thiolase-like superfamily. Chalcone/stilbene synthases family.

It catalyses the reaction (E)-4-coumaroyl-CoA + 3 malonyl-CoA + 3 H(+) = 2',4,4',6'-tetrahydroxychalcone + 3 CO2 + 4 CoA. Its pathway is secondary metabolite biosynthesis; flavonoid biosynthesis. The primary product of this enzyme is 4,2',4',6'-tetrahydroxychalcone (also termed naringenin-chalcone or chalcone) which can under specific conditions spontaneously isomerize into naringenin. The sequence is that of Chalcone synthase 4 (CHS4) from Pisum sativum (Garden pea).